Reading from the N-terminus, the 246-residue chain is Histone H1 (246 aa).

Disordered stretches follow at residues 1–51 (MATD…PTHL) and 105–246 (GGKL…KAKK). A compositionally biased stretch (low complexity) spans 9–34 (PAPLVDAAPEAPADAPAAPAADANAA). Basic residues predominate over residues 35 to 47 (KAKKATAPKKRAS). The region spanning 49–119 (THLPYAEMVS…KVKNSYKLSS (71 aa)) is the H15 domain. Basic residues-rich tracts occupy residues 129–189 (AAPK…KAKP) and 198–208 (PLAKKAGRAKA). Low complexity predominate over residues 224–235 (KKAAPSKKAATP).

The protein belongs to the histone H1/H5 family.

The protein resides in the nucleus. Its subcellular location is the chromosome. Its function is as follows. Histones H1 are necessary for the condensation of nucleosome chains into higher-order structures. In Zea mays (Maize), this protein is Histone H1.